The primary structure comprises 482 residues: Ras GTPase-activating protein-binding protein 2 (482 aa).

One can recognise an NTF2 domain in the interval 11 to 133 (VGREFVRQYY…FYVHNDMFRY (123 aa)). Residues 140–158 (DSEPELDEESEDEVEEEQE) show a composition bias toward acidic residues. Disordered stretches follow at residues 140–171 (DSEP…QENA) and 187–318 (EPLE…EQND). Phosphoserine occurs at positions 141, 149, and 225. The interval 142–220 (EPELDEESED…PQVEEKNLEE (79 aa)) is acidic disordered region. A compositionally biased stretch (basic and acidic residues) spans 191–225 (ESSHEPEPEPESETKTEELKPQVEEKNLEELEEKS). A Phosphothreonine modification is found at Thr-227. A Phosphoserine modification is found at Ser-235. Polar residues predominate over residues 247-264 (ASVTSKNLPPSGTVSSSG). Lys-281 participates in a covalent cross-link: Glycyl lysine isopeptide (Lys-Gly) (interchain with G-Cter in SUMO2). Basic and acidic residues predominate over residues 290-300 (RVREQRPRERP). The RRM domain maps to 331-409 (HQLFVGNLPH…VRLNVEEKKT (79 aa)). Position 392 is an N6-succinyllysine (Lys-392). Residues 404 to 476 (VEEKKTRAAR…GRGTGQMEGR (73 aa)) are RG-rich region. Residues 408 to 432 (KTRAARERETRGGGDDRRDIRRNDR) are compositionally biased toward basic and acidic residues. The disordered stretch occupies residues 408 to 482 (KTRAARERET…MEGRFTGQRR (75 aa)). Over residues 433–445 (GPGGPRGIVGGGM) the composition is skewed to gly residues. Arg-457 carries the post-translational modification Omega-N-methylarginine. Ser-466 carries the post-translational modification Phosphoserine. Arg-468 carries the post-translational modification Omega-N-methylarginine.

As to quaternary structure, forms homooligomers. Forms heterodimers with G3BP1. Interacts with NFKBIA (via N-terminus). Interacts (via NTF2 domain) with USP10; inhibiting stress granule formation. Interacts (via NTF2 domain) with CAPRIN1; promoting stress granule formation. Associates (via RG-rich region) with 40S ribosome subunits. Interacts with PABPC1. (Microbial infection) Interacts with non-structural protein 3 (via C-terminus) of Sindbis virus and Semliki forest virus; this interaction inhibits the formation of host stress granules on viral mRNAs and the nsp3-G3BP2 complexes bind viral RNAs and probably orchestrate the assembly of viral replication complexes. (Microbial infection) Cleaved by foot-and-mouth disease virus leader protease; this cleavage suppresses the formation of cytoplasmic stress granules.

The protein localises to the cytoplasm. The protein resides in the stress granule. With respect to regulation, under physiological conditions, G3BP2 adopts a compact state that is stabilized by intramolecular interactions between the RG-rich and the acidic regions that inhibit phase separation. Upon stress, polysomes disassemble and mRNAs are released in an unfolded protein-free state. Binding of unfolded mRNA to G3BP2 outcompetes the intramolecular interactions and RNA-bound G3BP2 adopts an expanded conformation in which the RG-rich region becomes exposed to engage in protein-protein and protein-RNA interactions, allowing physical cross-linking of RNA molecules to form protein-RNA condensates, leading to liquid-liquid phase separation (LLPS). Scaffold protein that plays an essential role in cytoplasmic stress granule formation which acts as a platform for antiviral signaling. Plays an essential role in stress granule formation. Stress granules are membraneless compartments that store mRNAs and proteins, such as stalled translation pre-initiation complexes, in response to stress. Promotes formation of stress granules phase-separated membraneless compartment by undergoing liquid-liquid phase separation (LLPS) upon unfolded RNA-binding: functions as a molecular switch that triggers RNA-dependent LLPS in response to a rise in intracellular free RNA concentrations. This Homo sapiens (Human) protein is Ras GTPase-activating protein-binding protein 2.